Here is a 440-residue protein sequence, read N- to C-terminus: Transposon Ty1-JR1 Gag polyprotein (440 aa).

Residues 1 to 16 (MESQQLSQHSHISHGS) show a composition bias toward low complexity. Disordered stretches follow at residues 1–93 (MESQ…MMTQ), 126–173 (PQSQ…RPPP), and 352–440 (GSRN…PGTY). Polar residues-rich tracts occupy residues 48–60 (TKANSQQTTTPAS) and 127–152 (QSQFPQYPSSVGTPLSTPSPESGNTF). Residues 153-165 (TDSSSADSDMTST) are compositionally biased toward low complexity. Residues 299–401 (NNGIHINNKV…NSKSKTARAH (103 aa)) are RNA-binding. Low complexity predominate over residues 402–418 (NVSTSNNSPSTDNDSIS). Residue S416 is modified to Phosphoserine. The span at 419 to 428 (KSTTEPIQLN) shows a compositional bias: polar residues. Over residues 429–440 (NKHDLHLRPGTY) the composition is skewed to basic and acidic residues.

In terms of assembly, homotrimer.

It localises to the cytoplasm. Capsid protein (CA) is the structural component of the virus-like particle (VLP), forming the shell that encapsulates the retrotransposons dimeric RNA genome. The particles are assembled from trimer-clustered units and there are holes in the capsid shells that allow for the diffusion of macromolecules. CA also has nucleocapsid-like chaperone activity, promoting primer tRNA(i)-Met annealing to the multipartite primer-binding site (PBS), dimerization of Ty1 RNA and initiation of reverse transcription. This chain is Transposon Ty1-JR1 Gag polyprotein (TY1A-JR1), found in Saccharomyces cerevisiae (strain ATCC 204508 / S288c) (Baker's yeast).